A 312-amino-acid polypeptide reads, in one-letter code: Malate dehydrogenase (312 aa).

Residues 12–17 and D36 contribute to the NAD(+) site; that span reads GSGFTG. Residues R87 and R93 each coordinate substrate. Residues N100 and 123–125 each bind NAD(+); that span reads LTN. Residue N125 participates in substrate binding. The residue at position 149 (S149) is a Phosphoserine. Position 156 (R156) interacts with substrate. Residue H180 is the Proton acceptor of the active site.

The protein belongs to the LDH/MDH superfamily. MDH type 3 family.

The enzyme catalyses (S)-malate + NAD(+) = oxaloacetate + NADH + H(+). Functionally, catalyzes the reversible oxidation of malate to oxaloacetate. The polypeptide is Malate dehydrogenase (Oceanobacillus iheyensis (strain DSM 14371 / CIP 107618 / JCM 11309 / KCTC 3954 / HTE831)).